The chain runs to 330 residues: Pyridoxal 5'-phosphate synthase subunit PdxS (330 aa).

D-ribose 5-phosphate is bound at residue D23. Catalysis depends on K80, which acts as the Schiff-base intermediate with D-ribose 5-phosphate. G152 contacts D-ribose 5-phosphate. Position 164 (R164) interacts with D-glyceraldehyde 3-phosphate. D-ribose 5-phosphate-binding positions include G250 and 271–272; that span reads GS.

It belongs to the PdxS/SNZ family. In terms of assembly, in the presence of PdxT, forms a dodecamer of heterodimers.

It carries out the reaction aldehydo-D-ribose 5-phosphate + D-glyceraldehyde 3-phosphate + L-glutamine = pyridoxal 5'-phosphate + L-glutamate + phosphate + 3 H2O + H(+). Its pathway is cofactor biosynthesis; pyridoxal 5'-phosphate biosynthesis. In terms of biological role, catalyzes the formation of pyridoxal 5'-phosphate from ribose 5-phosphate (RBP), glyceraldehyde 3-phosphate (G3P) and ammonia. The ammonia is provided by the PdxT subunit. Can also use ribulose 5-phosphate and dihydroxyacetone phosphate as substrates, resulting from enzyme-catalyzed isomerization of RBP and G3P, respectively. This is Pyridoxal 5'-phosphate synthase subunit PdxS from Methanocaldococcus jannaschii (strain ATCC 43067 / DSM 2661 / JAL-1 / JCM 10045 / NBRC 100440) (Methanococcus jannaschii).